The chain runs to 103 residues: MYRFACRTLMLAACILATGVAGLGVGAQSAAQTAPVPDYYWCPGQPFDPAWGPNWDPYTCHDDFHRDSDGPDHSRDYPGPILEGPVLDDPGAAPPPPAAGGGA.

The first 30 residues, 1 to 30 (MYRFACRTLMLAACILATGVAGLGVGAQSA), serve as a signal peptide directing secretion. Residues 61-76 (HDDFHRDSDGPDHSRD) show a composition bias toward basic and acidic residues. Positions 61–103 (HDDFHRDSDGPDHSRDYPGPILEGPVLDDPGAAPPPPAAGGGA) are disordered. Positions 92–103 (AAPPPPAAGGGA) are enriched in pro residues.

It belongs to the mycobacterial pilin family. As to quaternary structure, forms a homomer composed of subunits assembled in a large structure.

The protein localises to the fimbrium. Its function is as follows. Structural subunit of pili, which are thin, flexible, coiled-coil, aggregative fibers. Mediates adhesion to the extracellular matrix, an event that would facilitate direct interaction with the host epithelium during infection in the lung or other tissues. This is Pilin (mtp) from Mycobacterium bovis (strain ATCC BAA-935 / AF2122/97).